Here is a 368-residue protein sequence, read N- to C-terminus: D-alanine--D-alanine ligase (368 aa).

The region spanning 151-358 is the ATP-grasp domain; that stretch reads KKLLAAEGLP…YGTLVSTLVD (208 aa). Residue 179–234 coordinates ATP; it reads RSRLHLPVFVKPARGGSSIGITRVAEWAALDDAIAHARRHDPKVIVESGIAGREVE. Mg(2+) is bound by residues Asp313, Glu325, and Asn327.

Belongs to the D-alanine--D-alanine ligase family. It depends on Mg(2+) as a cofactor. Mn(2+) serves as cofactor.

The protein resides in the cytoplasm. It carries out the reaction 2 D-alanine + ATP = D-alanyl-D-alanine + ADP + phosphate + H(+). Its pathway is cell wall biogenesis; peptidoglycan biosynthesis. In terms of biological role, cell wall formation. The chain is D-alanine--D-alanine ligase from Rhodococcus opacus (strain B4).